A 142-amino-acid chain; its full sequence is Small ribosomal subunit protein uS9c (142 aa).

Belongs to the universal ribosomal protein uS9 family.

It is found in the plastid. Its subcellular location is the chloroplast. This is Small ribosomal subunit protein uS9c (rps9) from Stigeoclonium helveticum (Green alga).